The sequence spans 1171 residues: Protein WWC2 (1171 aa).

WW domains follow at residues 9–42 and 56–89; these read LPLPDGWEEARDYDGKVFYIDHNSRQTSWIDPRD and NELPWGWESSYDPQIGVYFINHINQTTQIEDPRK. Coiled coils occupy residues 120 to 193, 223 to 257, and 301 to 420; these read KEQR…YKEQ, ELKSIRKAISTGEKEKQDLMQSLVKLKERFHLEEA, and LAEK…KSAT. Disordered stretches follow at residues 521–552 and 603–637; these read SPTAQQDTQDAKPPKSVTSLSSLSSLSSLSPP and QALAERKSTGEGLRHQSSASQEGRTDIEFPRKNPD. Residues 534–551 show a composition bias toward low complexity; the sequence is PKSVTSLSSLSSLSSLSP. Composition is skewed to basic and acidic residues over residues 606 to 616 and 625 to 637; these read AERKSTGEGLR and GRTDIEFPRKNPD. The C2 domain maps to 684 to 806; sequence GAAQAQLILR…FSNDVHTQWY (123 aa). 2 coiled-coil regions span residues 836 to 870 and 1047 to 1123; these read LDLDAVSALLERTSAELEAVEQELAQEDDDQEQLC and DLEL…NAEK.

It belongs to the WWC family.

The protein resides in the cytoplasm. Its subcellular location is the cytosol. Functionally, negative regulator of the Hippo signaling pathway, also known as the Salvador-Warts-Hippo (SWH) pathway. In Xenopus tropicalis (Western clawed frog), this protein is Protein WWC2 (wwc2).